The sequence spans 1271 residues: Zinc finger transcription factor Trps1 (1271 aa).

2 disordered regions span residues 1–76 and 124–155; these read MVRK…DSAS and SPIK…DMSP. A compositionally biased stretch (polar residues) spans 34–49; that stretch reads SKEISTDPMQENSEQS. Residues 54–65 are compositionally biased toward basic and acidic residues; the sequence is HNSDDHSFHDQE. Positions 66–76 are enriched in polar residues; that stretch reads PSSSINKDSAS. The segment at 217 to 242 adopts a C2H2-type 1; atypical zinc-finger fold; the sequence is FKCNICGYGYYGNDPTDLIKHFRKYH. The segment at 328-353 adopts a C2H2-type 2; atypical zinc-finger fold; the sequence is FRCKFCNFTYLAKSATELEQHFLKTH. Residues 353–387 are disordered; that stretch reads HPNKMKMSSDSGKPSEKSTNKSSPIPRSCEPGDLG. The C2H2-type 3; atypical zinc-finger motif lies at 426–451; the sequence is YWCKFCSFSCESSSNSKLLEHHSKQH. A C2H2-type 4; atypical zinc finger spans residues 513–543; it reads YNCQFCDFRYSKSHGPEVILVGPLLRHYQQH. 3 consecutive C2H2-type zinc fingers follow at residues 604 to 627, 656 to 679, and 682 to 705; these read HQCD…ENAH, HSCT…RRVH, and YKCR…NSAH. The segment at 843–877 is disordered; it reads GVTAGASGEKSGQHTPQYPTAGDSKSKDESQSLLR. Residues 886–910 form a GATA-type zinc finger; it reads CANCLTTKTSLWRKNANGGYVCNAC. 3 disordered regions span residues 938 to 987, 1031 to 1064, and 1154 to 1196; these read RTRK…RENQ, SPQE…YMRP, and LDLA…EKSD. Residues 972–985 show a composition bias toward basic and acidic residues; it reads IRSEDHSMEGHQRE. Low complexity predominate over residues 1031-1049; sequence SPQESSGEPGNSSSVSDGK. Basic and acidic residues-rich tracts occupy residues 1050–1062 and 1170–1196; these read GSSE…EKYM and DSKE…EKSD. The transcriptional repressor domain stretch occupies residues 1153-1271; the sequence is PLDLAMKHSR…QAEKNGKNKD (119 aa). Glycyl lysine isopeptide (Lys-Gly) (interchain with G-Cter in SUMO) cross-links involve residues Lys-1182 and Lys-1191. 2 consecutive C2H2-type zinc fingers follow at residues 1205 to 1227 and 1233 to 1257; these read TKCV…MSCH and FQCS…RGLH.

As to quaternary structure, binds specifically to GATA sequences. Sumoylated. Sumoylation in the repressor domain inhibits the transcription repression activity. Sumoylation on Lys-1191 is the major site. Appears to be sumoylated on multiple sites.

The protein resides in the nucleus. Transcriptional repressor. Represses expression of GATA-regulated genes at selected sites and stages in vertebrate development. This is Zinc finger transcription factor Trps1 (trps1) from Xenopus laevis (African clawed frog).